Consider the following 96-residue polypeptide: MANFSLKAVKREDLGSGASRRLRRAGKIPAVIYGGDKEAVSIVLDHDKVLHSTEDKAFFSSEITLEIDGQEERVIIKALQRHPYKVKLVHADFMRV.

It belongs to the bacterial ribosomal protein bL25 family. Part of the 50S ribosomal subunit; part of the 5S rRNA/L5/L18/L25 subcomplex. Contacts the 5S rRNA. Binds to the 5S rRNA independently of L5 and L18.

Functionally, this is one of the proteins that binds to the 5S RNA in the ribosome where it forms part of the central protuberance. This Francisella philomiragia subsp. philomiragia (strain ATCC 25017 / CCUG 19701 / FSC 153 / O#319-036) protein is Large ribosomal subunit protein bL25.